Reading from the N-terminus, the 201-residue chain is dITP/XTP pyrophosphatase (201 aa).

8–13 (SNNPGK) provides a ligand contact to substrate. Mg(2+)-binding residues include Glu40 and Asp69. Asp69 serves as the catalytic Proton acceptor. Substrate-binding positions include Ser70, 155–158 (FGYD), Lys178, and 183–184 (HR).

It belongs to the HAM1 NTPase family. As to quaternary structure, homodimer. Requires Mg(2+) as cofactor.

The catalysed reaction is XTP + H2O = XMP + diphosphate + H(+). It carries out the reaction dITP + H2O = dIMP + diphosphate + H(+). It catalyses the reaction ITP + H2O = IMP + diphosphate + H(+). Functionally, pyrophosphatase that catalyzes the hydrolysis of nucleoside triphosphates to their monophosphate derivatives, with a high preference for the non-canonical purine nucleotides XTP (xanthosine triphosphate), dITP (deoxyinosine triphosphate) and ITP. Seems to function as a house-cleaning enzyme that removes non-canonical purine nucleotides from the nucleotide pool, thus preventing their incorporation into DNA/RNA and avoiding chromosomal lesions. The chain is dITP/XTP pyrophosphatase from Ralstonia nicotianae (strain ATCC BAA-1114 / GMI1000) (Ralstonia solanacearum).